We begin with the raw amino-acid sequence, 365 residues long: 2-aminoethylphosphonate--pyruvate transaminase (365 aa).

At Lys194 the chain carries N6-(pyridoxal phosphate)lysine.

Belongs to the class-V pyridoxal-phosphate-dependent aminotransferase family. PhnW subfamily. Homodimer. It depends on pyridoxal 5'-phosphate as a cofactor.

The enzyme catalyses (2-aminoethyl)phosphonate + pyruvate = phosphonoacetaldehyde + L-alanine. Involved in phosphonate degradation. The sequence is that of 2-aminoethylphosphonate--pyruvate transaminase from Bacillus cereus (strain 03BB102).